The sequence spans 168 residues: Probable chorismate pyruvate-lyase (168 aa).

Positions 75, 114, and 155 each coordinate substrate.

It belongs to the UbiC family.

The protein localises to the cytoplasm. It catalyses the reaction chorismate = 4-hydroxybenzoate + pyruvate. It participates in cofactor biosynthesis; ubiquinone biosynthesis. Removes the pyruvyl group from chorismate, with concomitant aromatization of the ring, to provide 4-hydroxybenzoate (4HB) for the ubiquinone pathway. The sequence is that of Probable chorismate pyruvate-lyase from Psychrobacter arcticus (strain DSM 17307 / VKM B-2377 / 273-4).